The primary structure comprises 182 residues: Adenine phosphoribosyltransferase (182 aa).

The protein belongs to the purine/pyrimidine phosphoribosyltransferase family. As to quaternary structure, homodimer.

It is found in the cytoplasm. The catalysed reaction is AMP + diphosphate = 5-phospho-alpha-D-ribose 1-diphosphate + adenine. It participates in purine metabolism; AMP biosynthesis via salvage pathway; AMP from adenine: step 1/1. Catalyzes a salvage reaction resulting in the formation of AMP, that is energically less costly than de novo synthesis. In Campylobacter jejuni subsp. doylei (strain ATCC BAA-1458 / RM4099 / 269.97), this protein is Adenine phosphoribosyltransferase.